We begin with the raw amino-acid sequence, 515 residues long: 2,3-bisphosphoglycerate-independent phosphoglycerate mutase (515 aa).

Mn(2+) is bound by residues Asp-14 and Ser-63. Ser-63 is an active-site residue. Substrate-binding positions include His-124, 154–155, Arg-186, Arg-192, 259–262, and Lys-334; these read RD and RADR. Mn(2+) is bound by residues Asp-401, His-405, Asp-442, His-443, and His-460.

The protein belongs to the BPG-independent phosphoglycerate mutase family. It depends on Mg(2+) as a cofactor. Requires Mn(2+) as cofactor.

It catalyses the reaction (2R)-2-phosphoglycerate = (2R)-3-phosphoglycerate. It functions in the pathway carbohydrate degradation; glycolysis; pyruvate from D-glyceraldehyde 3-phosphate: step 3/5. Its activity is regulated as follows. Activity is not affected by 2,3-bisphosphoglycerate. In terms of biological role, catalyzes the interconversion of 2-phosphoglycerate and 3-phosphoglycerate. The polypeptide is 2,3-bisphosphoglycerate-independent phosphoglycerate mutase (Brugia malayi (Filarial nematode worm)).